The primary structure comprises 426 residues: D-tagatose-1,6-bisphosphate aldolase subunit KbaZ (426 aa).

This sequence belongs to the GatZ/KbaZ family. KbaZ subfamily. As to quaternary structure, forms a complex with KbaY.

The protein operates within carbohydrate metabolism; D-tagatose 6-phosphate degradation; D-glyceraldehyde 3-phosphate and glycerone phosphate from D-tagatose 6-phosphate: step 2/2. Component of the tagatose-1,6-bisphosphate aldolase KbaYZ that is required for full activity and stability of the Y subunit. Could have a chaperone-like function for the proper and stable folding of KbaY. When expressed alone, KbaZ does not show any aldolase activity. In Escherichia coli O7:K1 (strain IAI39 / ExPEC), this protein is D-tagatose-1,6-bisphosphate aldolase subunit KbaZ.